Consider the following 418-residue polypeptide: Cytochrome P450 monooxygenase ABA2 (418 aa).

Cys-355 contributes to the heme binding site.

This sequence belongs to the cytochrome P450 family. Requires heme as cofactor.

It functions in the pathway hormone biosynthesis. Cytochrome P450 monooxygenase involved in the biosynthesis of abscisic acid (ABA), a phytohormone that acts antagonistically toward salicylic acid (SA), jasmonic acid (JA) and ethylene (ETH) signaling, to impede plant defense responses. During pathogen-host interaction, ABA plays a dual role in disease severity by increasing plant susceptibility and accelerating pathogenesis in the fungus itself. The first step of the pathway catalyzes the reaction from farnesyl diphosphate to alpha-ionylideneethane performed by the alpha-ionylideneethane synthase ABA3 via a three-step reaction mechanism involving 2 neutral intermediates, beta-farnesene and allofarnesene. The cytochrome P450 monooxygenase ABA1 might then be involved in the conversion of alpha-ionylideneethane to alpha-ionylideneacetic acid. Alpha-ionylideneacetic acid is further converted to abscisic acid in 2 steps involving the cytochrome P450 monooxygenase ABA2 and the short-chain dehydrogenase/reductase ABA4, via the intermediates 1'-deoxy-ABA or 1',4'-trans-diol-ABA, depending on the order of action of these 2 enzymes. ABA2 is responsible for the hydroxylation of carbon atom C-1' and ABA4 might be involved in the oxidation of the C-4' carbon atom. The protein is Cytochrome P450 monooxygenase ABA2 of Pyricularia oryzae (strain Y34) (Rice blast fungus).